The sequence spans 557 residues: Phosphoribosylaminoimidazole carboxylase, chloroplastic (557 aa).

The ATP-grasp domain maps to 108 to 293 (KVALLPAWIP…QFEQHLPAVV (186 aa)). 132-189 (WDSLDIHFMIKSRRLAYDGRGNFVAKSEEELSSAVDALGGFDRGLYAEKWAPFVKELA) lines the ATP pocket. An AIR carboxylase catalytic subunit region spans residues 387–557 (CSTLLGFIMG…HGWESYLKNS (171 aa)).

The protein in the C-terminal section; belongs to the AIR carboxylase family. Class I subfamily.

It localises to the plastid. Its subcellular location is the chloroplast. The enzyme catalyses 5-amino-1-(5-phospho-D-ribosyl)imidazole-4-carboxylate + H(+) = 5-amino-1-(5-phospho-beta-D-ribosyl)imidazole + CO2. Its pathway is purine metabolism; IMP biosynthesis via de novo pathway; 5-amino-1-(5-phospho-D-ribosyl)imidazole-4-carboxylate from 5-amino-1-(5-phospho-D-ribosyl)imidazole (carboxylase route): step 1/1. In Vigna aconitifolia (Moth bean), this protein is Phosphoribosylaminoimidazole carboxylase, chloroplastic (PURKE).